The primary structure comprises 286 residues: ATP synthase gamma chain (286 aa).

Belongs to the ATPase gamma chain family. F-type ATPases have 2 components, CF(1) - the catalytic core - and CF(0) - the membrane proton channel. CF(1) has five subunits: alpha(3), beta(3), gamma(1), delta(1), epsilon(1). CF(0) has three main subunits: a, b and c.

It is found in the cell inner membrane. Produces ATP from ADP in the presence of a proton gradient across the membrane. The gamma chain is believed to be important in regulating ATPase activity and the flow of protons through the CF(0) complex. This chain is ATP synthase gamma chain, found in Leptospira borgpetersenii serovar Hardjo-bovis (strain JB197).